Consider the following 88-residue polypeptide: DNA-directed RNA polymerase subunit omega (88 aa).

The protein belongs to the RNA polymerase subunit omega family. In terms of assembly, the RNAP catalytic core consists of 2 alpha, 1 beta, 1 beta' and 1 omega subunit. When a sigma factor is associated with the core the holoenzyme is formed, which can initiate transcription.

The enzyme catalyses RNA(n) + a ribonucleoside 5'-triphosphate = RNA(n+1) + diphosphate. Promotes RNA polymerase assembly. Latches the N- and C-terminal regions of the beta' subunit thereby facilitating its interaction with the beta and alpha subunits. This chain is DNA-directed RNA polymerase subunit omega, found in Pseudomonas aeruginosa (strain LESB58).